Reading from the N-terminus, the 59-residue chain is Large ribosomal subunit protein uL30 (59 aa).

It belongs to the universal ribosomal protein uL30 family. In terms of assembly, part of the 50S ribosomal subunit.

In Leptospira borgpetersenii serovar Hardjo-bovis (strain JB197), this protein is Large ribosomal subunit protein uL30.